Consider the following 210-residue polypeptide: Imidazole glycerol phosphate synthase subunit HisH (210 aa).

Positions 7 to 210 constitute a Glutamine amidotransferase type-1 domain; that stretch reads KVVIIDTGCA…SQLIKNFLEM (204 aa). Cys-82 serves as the catalytic Nucleophile. Catalysis depends on residues His-192 and Glu-194.

Heterodimer of HisH and HisF.

The protein localises to the cytoplasm. The enzyme catalyses 5-[(5-phospho-1-deoxy-D-ribulos-1-ylimino)methylamino]-1-(5-phospho-beta-D-ribosyl)imidazole-4-carboxamide + L-glutamine = D-erythro-1-(imidazol-4-yl)glycerol 3-phosphate + 5-amino-1-(5-phospho-beta-D-ribosyl)imidazole-4-carboxamide + L-glutamate + H(+). It catalyses the reaction L-glutamine + H2O = L-glutamate + NH4(+). It participates in amino-acid biosynthesis; L-histidine biosynthesis; L-histidine from 5-phospho-alpha-D-ribose 1-diphosphate: step 5/9. Functionally, IGPS catalyzes the conversion of PRFAR and glutamine to IGP, AICAR and glutamate. The HisH subunit catalyzes the hydrolysis of glutamine to glutamate and ammonia as part of the synthesis of IGP and AICAR. The resulting ammonia molecule is channeled to the active site of HisF. This is Imidazole glycerol phosphate synthase subunit HisH from Photobacterium profundum (strain SS9).